The chain runs to 423 residues: MDNHNSSHQLYKKAMALVLAGGRGSRLYNLTDTRAKPAVYFGGKFRIIDFALSNCLNSGIRRIGVVTQYKSHSLLRHLQRGWGFLRGELNEFIDLLPAQQRVDEEHWYRGTADAVYQNIDILRSYGPEYVIVLAGDHIYKMDYSIMLRDHAQSGYKCTVGCVEIAKEEAYAFGIMGIDENRKITSFIEKPKKNAPTIPGTTDRCYASMGIYIFNSDYLYDLLEEDITNKESSHDFGKDIIPRVVSENQALAHPFSMSCVPRCEGIEPYWRDVGTIDAFWEANLDLAANMPELNIYDKDWPVWTAQEQLPPVKFVPDRNGNHGVITNTLASGGCIVLGSEISKSLMFSKVRVLAGCKIDQCVIMPEVVVGENCRLKKVVIDKGCDIPAGMVIGEDPIEDAKNFYRTDKGVVLVTKKMIDELKEK.

Residues tyrosine 108, glycine 173, 188-189 (EK), and serine 207 contribute to the alpha-D-glucose 1-phosphate site.

It belongs to the bacterial/plant glucose-1-phosphate adenylyltransferase family. Homotetramer.

It carries out the reaction alpha-D-glucose 1-phosphate + ATP + H(+) = ADP-alpha-D-glucose + diphosphate. It participates in glycan biosynthesis; glycogen biosynthesis. In terms of biological role, involved in the biosynthesis of ADP-glucose, a building block required for the elongation reactions to produce glycogen. Catalyzes the reaction between ATP and alpha-D-glucose 1-phosphate (G1P) to produce pyrophosphate and ADP-Glc. The sequence is that of Glucose-1-phosphate adenylyltransferase from Francisella tularensis subsp. tularensis (strain WY96-3418).